Reading from the N-terminus, the 271-residue chain is Tropinone reductase homolog At2g29360 (271 aa).

An NADP(+)-binding site is contributed by 22 to 46 (LVTGGSKGIGEAVVEELATLGARIH). Serine 155 lines the substrate pocket. Tyrosine 168 acts as the Proton acceptor in catalysis.

Belongs to the short-chain dehydrogenases/reductases (SDR) family. SDR65C subfamily.

Its function is as follows. Oxidoreductase active on cyclic ketones, but not on tropinone or nortropinone. The sequence is that of Tropinone reductase homolog At2g29360 from Arabidopsis thaliana (Mouse-ear cress).